The primary structure comprises 343 residues: MLVTEFDYHLPPELIAQEPLVQRDATRLMTVERDGGGIGEIPFRGIVDLFRPGDLLVINDTRVIPARLLGRKESGGKTEIFLVRRRPGDHETWHCLIRSSKPPRPGVTVLLPEGVRAVVREPGDGETWLVSFTPGEGFQEWLDRNGAMPLPPYIRREADAADRDRYQTVFARNRGAVAAPTAGLHMTAGLLDEIAGRGVRVAPVTLHVGLGTFMPIRVERLEDHRMHRERYHIPPATADAINGCRREGGRVIALGTTVCRTLEQAAAADGTIAAGEGEADIFIYPGYRFKAVDALITNFHLPKSTLLMLVSAFAGRDLLFRAYGEAVARRFRFFSYGDAMFIF.

It belongs to the QueA family. As to quaternary structure, monomer.

The protein resides in the cytoplasm. The catalysed reaction is 7-aminomethyl-7-carbaguanosine(34) in tRNA + S-adenosyl-L-methionine = epoxyqueuosine(34) in tRNA + adenine + L-methionine + 2 H(+). The protein operates within tRNA modification; tRNA-queuosine biosynthesis. Functionally, transfers and isomerizes the ribose moiety from AdoMet to the 7-aminomethyl group of 7-deazaguanine (preQ1-tRNA) to give epoxyqueuosine (oQ-tRNA). This chain is S-adenosylmethionine:tRNA ribosyltransferase-isomerase, found in Geobacter sulfurreducens (strain ATCC 51573 / DSM 12127 / PCA).